A 134-amino-acid polypeptide reads, in one-letter code: Protein NrdI (134 aa).

Belongs to the NrdI family.

In terms of biological role, probably involved in ribonucleotide reductase function. This chain is Protein NrdI, found in Yersinia pseudotuberculosis serotype O:1b (strain IP 31758).